A 628-amino-acid chain; its full sequence is CMP-5'-(3-aminopropyl)phosphonate synthase (628 aa).

The tract at residues 1–255 (MNENRTFATP…DPGDQRQADF (255 aa)) is mobA-like NTP transferase. Residues 278-628 (GVTDHALLYN…TTEGAGRADG (351 aa)) form a decarboxylase region. Lys-466 is subject to N6-(pyridoxal phosphate)lysine.

This sequence in the N-terminal section; belongs to the MobA family. The protein in the C-terminal section; belongs to the class-I pyridoxal-phosphate-dependent aminotransferase family. The cofactor is Mg(2+). Pyridoxal 5'-phosphate serves as cofactor.

The catalysed reaction is 2-amino-4-phosphonobutanoate + CTP = CMP-5'-(3-amino-3-carboxypropyl)phosphonate + diphosphate. The enzyme catalyses CMP-5'-(3-amino-3-carboxypropyl)phosphonate + H(+) = CMP-5'-(3-aminopropyl)phosphonate + CO2. The protein operates within antibiotic biosynthesis. In terms of biological role, bifunctional cytidylyltransferase/decarboxylase involved in the biosynthesis of the phosphonate antibiotic FR-900098, a potent antimalarial agent that acts as an inhibitor of 1-deoxy-D-xylulose 5-phosphate reductoisomerase (DXR), the first enzyme in the nonmevalonate pathway for isoprenoid biosynthesis. Catalyzes the condensation of 2-amino-4-phosphonobutyrate (2APn) and CTP to form CMP-5'-2APn and then decarboxylates CMP-5'-2APn to yield CMP-5'-(3-aminopropyl)phosphonate (CMP-5'-3APn). The polypeptide is CMP-5'-(3-aminopropyl)phosphonate synthase (Streptomyces rubellomurinus (strain ATCC 31215)).